The primary structure comprises 367 residues: Glutamate 5-kinase (367 aa).

Lys9 contributes to the ATP binding site. The substrate site is built by Ser49, Asp136, and Asn148. ATP is bound by residues 168-169 and 210-216; these read TD and TGGMKSK. The region spanning 276-350 is the PUA domain; sequence SGQIEIDAGA…GMQSQHIQAR (75 aa).

This sequence belongs to the glutamate 5-kinase family.

It is found in the cytoplasm. The enzyme catalyses L-glutamate + ATP = L-glutamyl 5-phosphate + ADP. The protein operates within amino-acid biosynthesis; L-proline biosynthesis; L-glutamate 5-semialdehyde from L-glutamate: step 1/2. Its function is as follows. Catalyzes the transfer of a phosphate group to glutamate to form L-glutamate 5-phosphate. The protein is Glutamate 5-kinase of Bacillus cereus (strain ATCC 10987 / NRS 248).